A 434-amino-acid chain; its full sequence is 3-phosphoshikimate 1-carboxyvinyltransferase (434 aa).

Lys22, Ser23, and Arg27 together coordinate 3-phosphoshikimate. Residue Lys22 participates in phosphoenolpyruvate binding. Gly93 and Arg121 together coordinate phosphoenolpyruvate. 3-phosphoshikimate contacts are provided by Ser168, Ser169, Gln170, Ser199, Asp320, and Lys347. Phosphoenolpyruvate is bound at residue Gln170. Asp320 (proton acceptor) is an active-site residue. The phosphoenolpyruvate site is built by Arg351, Arg395, and Lys420.

It belongs to the EPSP synthase family. As to quaternary structure, monomer.

Its subcellular location is the cytoplasm. It carries out the reaction 3-phosphoshikimate + phosphoenolpyruvate = 5-O-(1-carboxyvinyl)-3-phosphoshikimate + phosphate. The protein operates within metabolic intermediate biosynthesis; chorismate biosynthesis; chorismate from D-erythrose 4-phosphate and phosphoenolpyruvate: step 6/7. In terms of biological role, catalyzes the transfer of the enolpyruvyl moiety of phosphoenolpyruvate (PEP) to the 5-hydroxyl of shikimate-3-phosphate (S3P) to produce enolpyruvyl shikimate-3-phosphate and inorganic phosphate. The sequence is that of 3-phosphoshikimate 1-carboxyvinyltransferase from Cupriavidus necator (strain ATCC 17699 / DSM 428 / KCTC 22496 / NCIMB 10442 / H16 / Stanier 337) (Ralstonia eutropha).